A 357-amino-acid polypeptide reads, in one-letter code: uncharacterized protein (357 aa).

9 helical membrane passes run 13 to 33 (PVTGIYNILLFNLFPLATYLV), 44 to 64 (IACTLLCSITVILAYRMCAVY), 72 to 92 (VSTFGLAYGFLIMMSLRTCFL), 148 to 168 (VLTYKSLGIRTAVYVGAFCFV), 181 to 201 (LPISANPWYIQVAFCVTSGFF), 203 to 223 (YLFINALYYLFAIIFVPLGIW), 266 to 286 (IALTGSKFLASCSCFFLSALF), 293 to 313 (SISGRCSPAFFFQLLIQPFLI), and 327 to 347 (YWVLIIEMLINGTYGMGVVLL).

It localises to the mitochondrion membrane. This is an uncharacterized protein from Schizosaccharomyces pombe (strain 972 / ATCC 24843) (Fission yeast).